The chain runs to 581 residues: Semenogelin-2 (581 aa).

An N-terminal signal peptide occupies residues Met-1–Gly-23. Disordered regions lie at residues Gln-24–Ser-62, Gly-132–Ser-157, Lys-173–Tyr-194, and Asn-271–Thr-581. 2 stretches are compositionally biased toward polar residues: residues Gly-138–Ser-157 and Glu-174–Tyr-194. Residues His-291–Lys-310 show a composition bias toward basic and acidic residues. The span at Lys-324 to Ser-333 shows a compositional bias: polar residues. Basic and acidic residues predominate over residues Gln-334–Lys-344. Over residues Lys-366 to Gln-396 the composition is skewed to polar residues. Composition is skewed to basic and acidic residues over residues Thr-412–Gln-425 and Asp-455–Lys-464. Polar residues-rich tracts occupy residues Gly-481–Thr-497 and Ser-505–Ser-529. Composition is skewed to basic and acidic residues over residues Ala-530–Tyr-545 and Thr-558–Thr-581.

The protein belongs to the semenogelin family. In terms of assembly, interacts with SERPINA5.

The protein localises to the secreted. In terms of biological role, participates in the formation of a gel matrix (sperm coagulum) entrapping the accessory gland secretions and ejaculated spermatozoa. The protein is Semenogelin-2 (SEMG2) of Pongo abelii (Sumatran orangutan).